A 344-amino-acid chain; its full sequence is Selenide, water dikinase (344 aa).

The active site involves Cys-15. ATP is bound by residues Lys-18 and 46-48 (TKD). A Mg(2+)-binding site is contributed by Asp-49. ATP-binding positions include Asp-66, Asp-89, and 137-139 (GHS). Residue Asp-89 coordinates Mg(2+). Residue Asp-225 participates in Mg(2+) binding.

It belongs to the selenophosphate synthase 1 family. Class I subfamily. Homodimer. Requires Mg(2+) as cofactor.

It catalyses the reaction hydrogenselenide + ATP + H2O = selenophosphate + AMP + phosphate + 2 H(+). Synthesizes selenophosphate from selenide and ATP. The sequence is that of Selenide, water dikinase from Colwellia psychrerythraea (strain 34H / ATCC BAA-681) (Vibrio psychroerythus).